A 269-amino-acid chain; its full sequence is Expansin-B9 (269 aa).

The N-terminal stretch at 1–24 (MGSLTTNIVLAVAVVAALVGGGSC) is a signal peptide. An N-linked (GlcNAc...) asparagine glycan is attached at Asn-34. Residues 63–169 (GGACGIKNVN…RRVRCKYPGG (107 aa)) form the Expansin-like EG45 domain. Disulfide bonds link Cys-66–Cys-94, Cys-97–Cys-164, and Cys-102–Cys-108. Residues 183-264 (NYLAVLVKFV…NWMPDAIYVS (82 aa)) enclose the Expansin-like CBD domain.

Belongs to the expansin family. Expansin B subfamily.

It localises to the secreted. The protein localises to the cell wall. The protein resides in the membrane. Its function is as follows. May cause loosening and extension of plant cell walls by disrupting non-covalent bonding between cellulose microfibrils and matrix glucans. No enzymatic activity has been found. May be required for rapid internodal elongation in deepwater rice during submergence. This chain is Expansin-B9 (EXPB9), found in Oryza sativa subsp. japonica (Rice).